We begin with the raw amino-acid sequence, 341 residues long: NADH-quinone oxidoreductase subunit H 1 (341 aa).

The next 8 helical transmembrane spans lie at 13-33 (LVVI…IAYI), 82-102 (GVFL…WAVI), 115-135 (VGVL…IMAG), 161-181 (IGFV…TAIV), 190-210 (LLGW…VSAL), 248-268 (YVAI…GWLP), 277-297 (WVPG…LFAM), and 317-337 (VFLP…QFAG).

It belongs to the complex I subunit 1 family. As to quaternary structure, NDH-1 is composed of 14 different subunits. Subunits NuoA, H, J, K, L, M, N constitute the membrane sector of the complex.

The protein resides in the cell inner membrane. The catalysed reaction is a quinone + NADH + 5 H(+)(in) = a quinol + NAD(+) + 4 H(+)(out). Its function is as follows. NDH-1 shuttles electrons from NADH, via FMN and iron-sulfur (Fe-S) centers, to quinones in the respiratory chain. The immediate electron acceptor for the enzyme in this species is believed to be ubiquinone. Couples the redox reaction to proton translocation (for every two electrons transferred, four hydrogen ions are translocated across the cytoplasmic membrane), and thus conserves the redox energy in a proton gradient. This subunit may bind ubiquinone. The polypeptide is NADH-quinone oxidoreductase subunit H 1 (Rhodopseudomonas palustris (strain BisB18)).